A 270-amino-acid polypeptide reads, in one-letter code: Type III pantothenate kinase (270 aa).

ATP is bound at residue D19–T26. Residues Y109 and G116–R119 each bind substrate. The active-site Proton acceptor is the D118. D139 provides a ligand contact to K(+). ATP is bound at residue T142. T194 serves as a coordination point for substrate.

Belongs to the type III pantothenate kinase family. Homodimer. NH4(+) is required as a cofactor. It depends on K(+) as a cofactor.

It localises to the cytoplasm. The enzyme catalyses (R)-pantothenate + ATP = (R)-4'-phosphopantothenate + ADP + H(+). The protein operates within cofactor biosynthesis; coenzyme A biosynthesis; CoA from (R)-pantothenate: step 1/5. Functionally, catalyzes the phosphorylation of pantothenate (Pan), the first step in CoA biosynthesis. This is Type III pantothenate kinase from Chlorobaculum tepidum (strain ATCC 49652 / DSM 12025 / NBRC 103806 / TLS) (Chlorobium tepidum).